The following is a 27-amino-acid chain: GCGGVCAYGESCPSSCNTCYSAQCTAQ.

Cystine bridges form between cysteine 2–cysteine 16, cysteine 6–cysteine 19, and cysteine 12–cysteine 24. 4-hydroxyproline is present on proline 13.

As to expression, expressed by the venom duct.

Its subcellular location is the secreted. Functionally, probable neurotoxin that inhibits ion channels. The sequence is that of Conotoxin Bt9.2 from Conus betulinus (Beech cone).